Consider the following 205-residue polypeptide: Holliday junction branch migration complex subunit RuvA (205 aa).

The interval 1–64 (MIGRIRGLLI…EDAQLLYGFI (64 aa)) is domain I. The domain II stretch occupies residues 65–143 (SKQERSLFRL…SLMEASVGSE (79 aa)). A flexible linker region spans residues 144-156 (REFMLQSNYTAPE). The tract at residues 157–205 (AVNTAEEDAIAALLSLGYKPAQASKAVSSVYTDGMSSETLIKSALKSML) is domain III.

The protein belongs to the RuvA family. As to quaternary structure, homotetramer. Forms an RuvA(8)-RuvB(12)-Holliday junction (HJ) complex. HJ DNA is sandwiched between 2 RuvA tetramers; dsDNA enters through RuvA and exits via RuvB. An RuvB hexamer assembles on each DNA strand where it exits the tetramer. Each RuvB hexamer is contacted by two RuvA subunits (via domain III) on 2 adjacent RuvB subunits; this complex drives branch migration. In the full resolvosome a probable DNA-RuvA(4)-RuvB(12)-RuvC(2) complex forms which resolves the HJ.

It localises to the cytoplasm. Functionally, the RuvA-RuvB-RuvC complex processes Holliday junction (HJ) DNA during genetic recombination and DNA repair, while the RuvA-RuvB complex plays an important role in the rescue of blocked DNA replication forks via replication fork reversal (RFR). RuvA specifically binds to HJ cruciform DNA, conferring on it an open structure. The RuvB hexamer acts as an ATP-dependent pump, pulling dsDNA into and through the RuvAB complex. HJ branch migration allows RuvC to scan DNA until it finds its consensus sequence, where it cleaves and resolves the cruciform DNA. The polypeptide is Holliday junction branch migration complex subunit RuvA (Shewanella halifaxensis (strain HAW-EB4)).